Here is a 361-residue protein sequence, read N- to C-terminus: Protein RecA (361 aa).

ATP is bound at residue 77–84; the sequence is GPESSGKT.

The protein belongs to the RecA family.

The protein localises to the cytoplasm. Functionally, can catalyze the hydrolysis of ATP in the presence of single-stranded DNA, the ATP-dependent uptake of single-stranded DNA by duplex DNA, and the ATP-dependent hybridization of homologous single-stranded DNAs. It interacts with LexA causing its activation and leading to its autocatalytic cleavage. This chain is Protein RecA, found in Brucella suis (strain ATCC 23445 / NCTC 10510).